A 194-amino-acid chain; its full sequence is CASP-like protein 4D1 (194 aa).

Over 1–10 (MASRTVLLPS) the chain is Cytoplasmic. A helical membrane pass occupies residues 11-31 (AVLILRLLSLGLLAASLALIA). Topologically, residues 32–55 (ADKLNVDSDPPQRYTFRDVYAYRY) are extracellular. Residues 56–76 (VLAVAVIGCAYTLLQLPLAAV) traverse the membrane as a helical segment. Residues 77 to 94 (SIIASGNNKRGIGAGGGS) lie on the Cytoplasmic side of the membrane. A helical transmembrane segment spans residues 95-115 (VAVALLVLVLLADVVFALLLA). The Extracellular portion of the chain corresponds to 116–161 (TGAAAGFAFTYDVKRYLDGQFDDDSIGTPEVDKLHRDMDKFFDLAY). Residues 162–182 (AAAGLMLAAAACMALVIMLSV) traverse the membrane as a helical segment. Residues 183-194 (YSLARQVRSDYI) lie on the Cytoplasmic side of the membrane.

The protein belongs to the Casparian strip membrane proteins (CASP) family. As to quaternary structure, homodimer and heterodimers.

It localises to the cell membrane. This is CASP-like protein 4D1 from Sorghum bicolor (Sorghum).